The primary structure comprises 217 residues: UPF0502 protein AHA_2872 (217 aa).

It belongs to the UPF0502 family.

This Aeromonas hydrophila subsp. hydrophila (strain ATCC 7966 / DSM 30187 / BCRC 13018 / CCUG 14551 / JCM 1027 / KCTC 2358 / NCIMB 9240 / NCTC 8049) protein is UPF0502 protein AHA_2872.